Here is an 889-residue protein sequence, read N- to C-terminus: DNA-directed RNA polymerase subunit Rpo1N (889 aa).

Cysteine 62, cysteine 65, cysteine 72, histidine 75, cysteine 102, cysteine 105, cysteine 149, and cysteine 152 together coordinate Zn(2+). 3 residues coordinate Mg(2+): aspartate 466, aspartate 468, and aspartate 470.

Belongs to the RNA polymerase beta' chain family. As to quaternary structure, part of the RNA polymerase complex. Requires Mg(2+) as cofactor. The cofactor is Zn(2+).

The protein localises to the cytoplasm. The catalysed reaction is RNA(n) + a ribonucleoside 5'-triphosphate = RNA(n+1) + diphosphate. Its function is as follows. DNA-dependent RNA polymerase (RNAP) catalyzes the transcription of DNA into RNA using the four ribonucleoside triphosphates as substrates. Forms the clamp head domain. This chain is DNA-directed RNA polymerase subunit Rpo1N, found in Methanococcus vannielii (strain ATCC 35089 / DSM 1224 / JCM 13029 / OCM 148 / SB).